Consider the following 386-residue polypeptide: Succinate--CoA ligase [ADP-forming] subunit beta (386 aa).

The ATP-grasp domain occupies 9-244 (KAVLRSYGVS…LDEEDSKEIE (236 aa)). Residues lysine 46, 53 to 55 (GRG), glutamate 99, cysteine 102, and glutamate 107 each bind ATP. Mg(2+)-binding residues include asparagine 199 and aspartate 213. Substrate-binding positions include asparagine 264 and 321–323 (GIM).

This sequence belongs to the succinate/malate CoA ligase beta subunit family. As to quaternary structure, heterotetramer of two alpha and two beta subunits. Requires Mg(2+) as cofactor.

The enzyme catalyses succinate + ATP + CoA = succinyl-CoA + ADP + phosphate. The catalysed reaction is GTP + succinate + CoA = succinyl-CoA + GDP + phosphate. It participates in carbohydrate metabolism; tricarboxylic acid cycle; succinate from succinyl-CoA (ligase route): step 1/1. Succinyl-CoA synthetase functions in the citric acid cycle (TCA), coupling the hydrolysis of succinyl-CoA to the synthesis of either ATP or GTP and thus represents the only step of substrate-level phosphorylation in the TCA. The beta subunit provides nucleotide specificity of the enzyme and binds the substrate succinate, while the binding sites for coenzyme A and phosphate are found in the alpha subunit. This is Succinate--CoA ligase [ADP-forming] subunit beta from Bacillus cereus (strain B4264).